Consider the following 217-residue polypeptide: Small ribosomal subunit protein uS3 (217 aa).

The 69-residue stretch at 38–106 folds into the KH type-2 domain; that stretch reads IRKFVQKELA…QVHINIIEIK (69 aa).

Belongs to the universal ribosomal protein uS3 family. As to quaternary structure, part of the 30S ribosomal subunit. Forms a tight complex with proteins S10 and S14.

Functionally, binds the lower part of the 30S subunit head. Binds mRNA in the 70S ribosome, positioning it for translation. This Streptococcus pneumoniae serotype 19F (strain G54) protein is Small ribosomal subunit protein uS3.